The primary structure comprises 149 residues: Squidulin (149 aa).

Alanine 1 carries the N-acetylalanine modification. 4 EF-hand domains span residues 7–42 (KQIAEIKDAFDMFDIDGDGQITSKELRSVMKSLGRT), 43–78 (PSDAELEEMIREVDTDGNGTIEYAEFVEMMAKQMGP), 80–115 (DPEKEMREAFRVFDKDGNGLITAAELRQVMANFSDE), and 117–149 (LTSEEISEMIREADIDGDGMVNYEEFVKMMTPK). The Ca(2+) site is built by aspartate 20, aspartate 22, aspartate 24, glutamine 26, glutamate 31, aspartate 56, aspartate 58, asparagine 60, threonine 62, glutamate 67, aspartate 93, aspartate 95, asparagine 97, glutamate 104, aspartate 130, aspartate 132, aspartate 134, methionine 136, and glutamate 141.

It belongs to the calmodulin family.

Functionally, not known. This protein has four functional calcium-binding sites. The chain is Squidulin from Doryteuthis pealeii (Longfin inshore squid).